The sequence spans 72 residues: MSSEILDQLESKIRQAVETIQLLQLEVEELKEKNDQAQQANDALRNENEQLKVEHNNWQERLRSLLGQIDNV.

Residues 1 to 72 (MSSEILDQLE…RSLLGQIDNV (72 aa)) are a coiled coil.

Belongs to the ZapB family. As to quaternary structure, homodimer. The ends of the coiled-coil dimer bind to each other, forming polymers. Interacts with FtsZ.

Its subcellular location is the cytoplasm. Functionally, non-essential, abundant cell division factor that is required for proper Z-ring formation. It is recruited early to the divisome by direct interaction with FtsZ, stimulating Z-ring assembly and thereby promoting cell division earlier in the cell cycle. Its recruitment to the Z-ring requires functional FtsA or ZipA. In Actinobacillus succinogenes (strain ATCC 55618 / DSM 22257 / CCUG 43843 / 130Z), this protein is Cell division protein ZapB.